The chain runs to 299 residues: MNILLFGKTGQVGWELQRALAPLGNLIALDVHSTDYCGDFSNPEGVAETVKKIRPDVIVNAAAHTAVDKAESEPNFAQLLNATCVEAIAKAANEVGAWVIHYSTDYVFPGNGDTPWLETDATAPLNVYGETKLAGEKALQEHCAKHLIFRTSWVYAGKGNNFAKTMLRLAKEREELAVINDQFGAPTGAELLADCTAHAIRVAANKPEVAGLYHLVAGGTTTWHDYAALVFEEARRAGINLALNKLNAVPTTAYPTPARRPHNSRLNTEKFQQNFALVLPDWQVGVKRMLNELFTTTAI.

NADH-binding positions include 10–12 (GQV), Asp30, 39–40 (DF), and 63–65 (AHT). 11–12 (QV) is a binding site for NADPH. Residues 39–40 (DF), 63–65 (AHT), and Tyr102 contribute to the NADPH site. Position 104 to 105 (104 to 105 (TD)) interacts with dTDP-beta-L-rhamnose. Positions 128 and 132 each coordinate NADH. 2 residues coordinate NADPH: Tyr128 and Lys132. Tyr128 serves as the catalytic Proton donor/acceptor. Trp153 contacts dTDP-beta-L-rhamnose.

The protein belongs to the dTDP-4-dehydrorhamnose reductase family. As to quaternary structure, homodimer. The cofactor is Mg(2+).

It catalyses the reaction dTDP-beta-L-rhamnose + NADP(+) = dTDP-4-dehydro-beta-L-rhamnose + NADPH + H(+). Its pathway is carbohydrate biosynthesis; dTDP-L-rhamnose biosynthesis. It functions in the pathway bacterial outer membrane biogenesis; LPS O-antigen biosynthesis. Functionally, involved in the biosynthesis of the dTDP-L-rhamnose which is an important component of lipopolysaccharide (LPS). Catalyzes the reduction of dTDP-6-deoxy-L-lyxo-4-hexulose to yield dTDP-L-rhamnose. RmlD uses NADH and NADPH nearly equally well. The polypeptide is dTDP-4-dehydrorhamnose reductase (Shigella flexneri).